We begin with the raw amino-acid sequence, 688 residues long: Complement C1s subcomponent (688 aa).

An N-terminal signal peptide occupies residues 1 to 15 (MWCFVFFSLLASFSA). Residues 16-130 (EPTMYGEILS…TGFAAYYSAV (115 aa)) enclose the CUB 1 domain. Ca(2+) contacts are provided by glutamate 60, aspartate 68, aspartate 113, aspartate 131, valine 132, and glutamate 134. A disulfide bond links cysteine 65 and cysteine 83. In terms of domain architecture, EGF-like; calcium-binding spans 131–172 (DVNECTDFTDVPCSHFCNNFIGGYFCSCPPEYFLHDDMRTCG). 3 cysteine pairs are disulfide-bonded: cysteine 135–cysteine 147, cysteine 143–cysteine 156, and cysteine 158–cysteine 171. Asparagine 149, phenylalanine 150, and glycine 153 together coordinate Ca(2+). Residue asparagine 149 is modified to (3R)-3-hydroxyasparagine. N-linked (GlcNAc...) asparagine glycosylation is present at asparagine 174. A disulfide bridge connects residues cysteine 175 and cysteine 202. The CUB 2 domain maps to 175–290 (CSGDVFTALI…KGWKLRYHGD (116 aa)). Ca(2+) is bound by residues glutamate 226, aspartate 236, aspartate 275, glycine 278, and glutamine 279. Cysteines 234 and 251 form a disulfide. Sushi domains lie at 292 to 356 (IPCP…ECQP) and 357 to 423 (VDCG…KCIP). Intrachain disulfides connect cysteine 294/cysteine 341, cysteine 321/cysteine 354, cysteine 359/cysteine 403, cysteine 386/cysteine 421, cysteine 425/cysteine 549, cysteine 595/cysteine 618, and cysteine 627/cysteine 659. Asparagine 406 carries N-linked (GlcNAc...) asparagine glycosylation. Residues 438 to 680 (IFGGYSTKIQ…YVDWILKTMQ (243 aa)) form the Peptidase S1 domain. Catalysis depends on charge relay system residues histidine 475 and aspartate 529. Catalysis depends on serine 631, which acts as the Charge relay system.

This sequence belongs to the peptidase S1 family. In terms of assembly, core component of the complement C1 complex, a calcium-dependent complex composed of 1 molecule of the C1Q subcomplex, 2 molecules of C1R and 2 molecules of C1S. The C1Q subcomplex is composed 18 subunits: 3 chains of C1QA, C1QB, and C1QC trimerize to form 6 collagen-like triple helices connected to six globular ligand-recognition modules. Post-translationally, cleaved and activated by C1R to generate Complement C1s subcomponent heavy and light chains. In terms of processing, the iron and 2-oxoglutarate dependent 3-hydroxylation of aspartate and asparagine is (R) stereospecific within EGF domains.

It is found in the secreted. Its subcellular location is the cell surface. The enzyme catalyses Cleavage of Arg-|-Ala bond in complement component C4 to form C4a and C4b, and Lys(or Arg)-|-Lys bond in complement component C2 to form C2a and C2b: the 'classical' pathway C3 convertase.. Cleaved and activated by C1R. Immunoglobulin-binding promotes autoactivation of C1R, which results in the cleavage of the Arg-Ile bond in the catalytic domain. Inhibited by C1 inhibitor (SERPING1). Functionally, component of the complement C1 complex, a multiprotein complex that initiates the classical pathway of the complement system, a cascade of proteins that leads to phagocytosis and breakdown of pathogens and signaling that strengthens the adaptive immune system. C1S is activated following association of the C1 complex with immunoglobulins (IgG or IgM) complexed with antigens to form antigen-antibody complexes on the surface of pathogens. C1S is cleaved and activated by C1R to generate C1s subcomponent heavy and light chains. C1s subcomponent light chain then cleaves and activates C2 and C4, the next components of the classical complement pathway. In terms of biological role, serine protease component of the complement C1 complex, which catalyzes cleavage and activation of C2 and C4, the next components of the classical complement pathway. Also cleaves IGFBP5 and thereby inhibits the trophic effects of IGF1. This chain is Complement C1s subcomponent, found in Rattus norvegicus (Rat).